The chain runs to 201 residues: NADH-ubiquinone oxidoreductase 21.3 kDa subunit (201 aa).

As to quaternary structure, complex I is composed of about 40 different subunits.

The protein resides in the mitochondrion inner membrane. It carries out the reaction a ubiquinone + NADH + 5 H(+)(in) = a ubiquinol + NAD(+) + 4 H(+)(out). Functionally, transfer of electrons from NADH to the respiratory chain. The immediate electron acceptor for the enzyme is believed to be ubiquinone. The chain is NADH-ubiquinone oxidoreductase 21.3 kDa subunit from Neurospora crassa (strain ATCC 24698 / 74-OR23-1A / CBS 708.71 / DSM 1257 / FGSC 987).